The chain runs to 106 residues: Biogenesis of lysosome-related organelles complex 1 subunit 6 (106 aa).

Residues 78-106 (KKTSQLELSDTNIEDGSTTSTPTTTNKSQ) are disordered. Over residues 82–93 (QLELSDTNIEDG) the composition is skewed to polar residues. Residues 94 to 106 (STTSTPTTTNKSQ) show a composition bias toward low complexity.

The protein belongs to the BLOC1S6 family. As to quaternary structure, homodimer (isoform 1). Component of the biogenesis of lysosome-related organelles complex-1 (BLOC-1) composed at least of blos-1, blos-2, blos-4, dsbn-1, glo-2, mutd-1 and snpn-1. Isoform 1 interacts with blos-1 and blos-4.

The protein localises to the cytoplasm. Its subcellular location is the endosome. In terms of biological role, component of the biogenesis of lysosome-related organelles complex-1 (BLOC-1) involved in gut granule biogenesis. In Caenorhabditis elegans, this protein is Biogenesis of lysosome-related organelles complex 1 subunit 6 (glo-2).